A 174-amino-acid polypeptide reads, in one-letter code: Small ribosomal subunit protein bS16 (174 aa).

The segment at 81-174 (QRFTGEPAPP…DATTDATPSA (94 aa)) is disordered. The span at 87 to 97 (PAPPPMKTAPP) shows a compositional bias: pro residues. Over residues 98–118 (KPDKKALFEAAAKEAAGEPRA) the composition is skewed to basic and acidic residues. The span at 135–158 (ETTPAAEAAPDAAASADEPAGGAS) shows a compositional bias: low complexity. The segment covering 160 to 174 (AAESQDATTDATPSA) has biased composition (polar residues).

The protein belongs to the bacterial ribosomal protein bS16 family.

The polypeptide is Small ribosomal subunit protein bS16 (Acidothermus cellulolyticus (strain ATCC 43068 / DSM 8971 / 11B)).